Consider the following 91-residue polypeptide: Small ribosomal subunit protein bS6 (91 aa).

It belongs to the bacterial ribosomal protein bS6 family.

Functionally, binds together with bS18 to 16S ribosomal RNA. The polypeptide is Small ribosomal subunit protein bS6 (Leptospira biflexa serovar Patoc (strain Patoc 1 / Ames)).